An 83-amino-acid polypeptide reads, in one-letter code: Cytochrome b559 subunit alpha (83 aa).

A helical membrane pass occupies residues 21-35; that stretch reads VIHSITIPSLFIAGW. A heme-binding site is contributed by histidine 23.

This sequence belongs to the PsbE/PsbF family. In terms of assembly, heterodimer of an alpha subunit and a beta subunit. PSII is composed of 1 copy each of membrane proteins PsbA, PsbB, PsbC, PsbD, PsbE, PsbF, PsbH, PsbI, PsbJ, PsbK, PsbL, PsbM, PsbT, PsbX, PsbY, PsbZ, Psb30/Ycf12, at least 3 peripheral proteins of the oxygen-evolving complex and a large number of cofactors. It forms dimeric complexes. Requires heme b as cofactor.

The protein resides in the plastid. It localises to the chloroplast thylakoid membrane. This b-type cytochrome is tightly associated with the reaction center of photosystem II (PSII). PSII is a light-driven water:plastoquinone oxidoreductase that uses light energy to abstract electrons from H(2)O, generating O(2) and a proton gradient subsequently used for ATP formation. It consists of a core antenna complex that captures photons, and an electron transfer chain that converts photonic excitation into a charge separation. The chain is Cytochrome b559 subunit alpha from Oenothera berteroana (Bertero's evening primrose).